A 116-amino-acid chain; its full sequence is Putative pterin-4-alpha-carbinolamine dehydratase (116 aa).

This sequence belongs to the pterin-4-alpha-carbinolamine dehydratase family.

It carries out the reaction (4aS,6R)-4a-hydroxy-L-erythro-5,6,7,8-tetrahydrobiopterin = (6R)-L-erythro-6,7-dihydrobiopterin + H2O. This chain is Putative pterin-4-alpha-carbinolamine dehydratase, found in Paracidovorax citrulli (strain AAC00-1) (Acidovorax citrulli).